The chain runs to 60 residues: U20-myrmicitoxin-Mri1a (60 aa).

The first 24 residues, 1–24 (MKSVILLFAVIAIIVAVIIPAING), serve as a signal peptide directing secretion. The propeptide occupies 25–34 (ESSSNPSANA).

It belongs to the formicidae venom precursor-01 superfamily. In terms of tissue distribution, expressed by the venom gland.

The protein resides in the secreted. Functionally, induces paralysis 5 minutes after injection into blowflies (L.caesar), and then death within 24 hours. May have antimicrobial properties, like most ant linear peptides. The protein is U20-myrmicitoxin-Mri1a of Manica rubida (European giant red ant).